The sequence spans 546 residues: High-affinity glucose transporter ght5 (546 aa).

The Cytoplasmic segment spans residues 1–9 (MGKNLTIVM). The helical transmembrane segment at 10-30 (LVFVSMAGWMFGADTGSIGGI) threads the bilayer. Residues 31-58 (TNMRDFQSRFADRYNPVTDSYSYSSARQ) are Extracellular-facing. A helical transmembrane segment spans residues 59–79 (GLITGMVNVGSFFGCFLSSPL). Over 80–87 (MDRIGKRT) the chain is Cytoplasmic. A helical transmembrane segment spans residues 88–108 (SIMFWTIVYLIGIILQVTAVP). The Extracellular portion of the chain corresponds to 109 to 112 (SWVQ). The helical transmembrane segment at 113–133 (IMVAKIWTGLSIGALSVLAPG) threads the bilayer. At 134-144 (FQSEVAPADLR) the chain is on the cytoplasmic side. The helical transmembrane segment at 145–165 (GTIVTTYQLAVTGGIFIAACI) threads the bilayer. Over 166–179 (NMGTHKLHKTAQWR) the chain is Extracellular. Residues 180-200 (VSMGINLLWGIITFIGISFLP) traverse the membrane as a helical segment. The Cytoplasmic portion of the chain corresponds to 201 to 266 (ESPRYLISVG…IFGPDIRYRT (66 aa)). Residues 267-285 (FLGLGVMSLQQLTGDNYYF) form a helical membrane-spanning segment. Residues 286–301 (YYGFEVFEGTGMNSPY) are Extracellular-facing. A helical transmembrane segment spans residues 302–322 (LSALILDAVNFGCTFGGLFVL). The Cytoplasmic portion of the chain corresponds to 323-328 (EFFGRR). The helical transmembrane segment at 329–349 (MPLIIGALWQSITFFIYAAVG) threads the bilayer. Over 350 to 363 (NRALTRKNGTSNHR) the chain is Extracellular. A glycan (N-linked (GlcNAc...) asparagine) is linked at asparagine 357. Residues 364 to 384 (AGAVMIVFSCLFIFSFAQTWG) traverse the membrane as a helical segment. The Cytoplasmic segment spans residues 385–404 (PAAYVIVGESYPIRYRSKCA). A helical transmembrane segment spans residues 405-425 (AVATTGNWLWGFLISFFTPFI). Topologically, residues 426 to 432 (TNSIGFK) are extracellular. A helical membrane pass occupies residues 433 to 453 (YGYIFAACNLCAACIIFLFAH). Topologically, residues 454-546 (ETKGLTLEEI…SYHDQEEQFA (93 aa)) are cytoplasmic. The segment at 486–546 (KQQEEVREKS…SYHDQEEQFA (61 aa)) is disordered. The segment covering 487-496 (QQEEVREKSR) has biased composition (basic and acidic residues). Over residues 509–519 (VDGEEGIEDSS) the composition is skewed to acidic residues. The segment covering 520 to 529 (NDISSTTSSD) has biased composition (low complexity). Serine 528 and serine 537 each carry phosphoserine. The segment covering 530–546 (GRAKPESSYHDQEEQFA) has biased composition (basic and acidic residues).

It belongs to the major facilitator superfamily. Sugar transporter (TC 2.A.1.1) family.

The protein resides in the membrane. Functionally, high-affinity glucose transporter. In Schizosaccharomyces pombe (strain 972 / ATCC 24843) (Fission yeast), this protein is High-affinity glucose transporter ght5 (ght5).